The primary structure comprises 917 residues: Protein translocase subunit SecA (917 aa).

ATP-binding positions include Q87, 105 to 109 (GEGKT), and D501. Positions 901, 903, 912, and 913 each coordinate Zn(2+).

Belongs to the SecA family. As to quaternary structure, monomer and homodimer. Part of the essential Sec protein translocation apparatus which comprises SecA, SecYEG and auxiliary proteins SecDF-YajC and YidC. It depends on Zn(2+) as a cofactor.

Its subcellular location is the cell inner membrane. The protein resides in the cytoplasm. It catalyses the reaction ATP + H2O + cellular proteinSide 1 = ADP + phosphate + cellular proteinSide 2.. Functionally, part of the Sec protein translocase complex. Interacts with the SecYEG preprotein conducting channel. Has a central role in coupling the hydrolysis of ATP to the transfer of proteins into and across the cell membrane, serving both as a receptor for the preprotein-SecB complex and as an ATP-driven molecular motor driving the stepwise translocation of polypeptide chains across the membrane. This chain is Protein translocase subunit SecA, found in Granulibacter bethesdensis (strain ATCC BAA-1260 / CGDNIH1).